The following is a 435-amino-acid chain: Homogentisate 1,2-dioxygenase (435 aa).

The active-site Proton acceptor is His289. Positions 332 and 338 each coordinate Fe cation. Homogentisate is bound by residues Tyr347 and His368. His368 contacts Fe cation.

This sequence belongs to the homogentisate dioxygenase family. As to quaternary structure, hexamer; dimer of trimers. Requires Fe cation as cofactor.

The enzyme catalyses homogentisate + O2 = 4-maleylacetoacetate + H(+). Its pathway is amino-acid degradation; L-phenylalanine degradation; acetoacetate and fumarate from L-phenylalanine: step 4/6. In terms of biological role, involved in the catabolism of homogentisate (2,5-dihydroxyphenylacetate or 2,5-OH-PhAc), a central intermediate in the degradation of phenylalanine and tyrosine. Catalyzes the oxidative ring cleavage of the aromatic ring of homogentisate to yield maleylacetoacetate. The protein is Homogentisate 1,2-dioxygenase of Pseudomonas savastanoi pv. phaseolicola (strain 1448A / Race 6) (Pseudomonas syringae pv. phaseolicola (strain 1448A / Race 6)).